Reading from the N-terminus, the 153-residue chain is Probable succinate transporter subunit YjjB (153 aa).

A run of 4 helical transmembrane segments spans residues 7 to 27 (WALLQDMVLAAIPALGFAMVF), 51 to 71 (MIHFGMNIELASLVASIMIGI), 83 to 103 (VFTVAAVIPMFPGISAYTAMI), and 125 to 145 (FLKASFIVGALSIGLSLPGLW).

The protein belongs to the ThrE exporter (TC 2.A.79) family. The transporter is composed of YjjB and YjjP.

It is found in the cell inner membrane. Functionally, involved in succinate export with YjjP. Both proteins are required for export. The polypeptide is Probable succinate transporter subunit YjjB (Yersinia pestis bv. Antiqua (strain Antiqua)).